Consider the following 184-residue polypeptide: UPF0340 protein TTE0860 (184 aa).

Belongs to the UPF0340 family.

The chain is UPF0340 protein TTE0860 from Caldanaerobacter subterraneus subsp. tengcongensis (strain DSM 15242 / JCM 11007 / NBRC 100824 / MB4) (Thermoanaerobacter tengcongensis).